Consider the following 640-residue polypeptide: MKNKNSEQNTHSTIGEQDIHYFHEGKHIYAYEFMGAHKACEEGIEGIRFTTWAPNAKSICVIGDFNYWQVEDKNYMEPITDAGLWSVFIPNAKNGDKYKFVVTNKDTNNYVYKSDPYAFFSELRPNTASIITTETQYTWSDDKWLEKRAKTNYYDNPMNVYELHLASWKTKNGKFLTYDELNETLPQYIKEMGYTHVEFMPLHEHPLDASWGYQPTGFYSVNSRHGDIIGLKRLVDKLHNNDIGVILDWVPGHFCKDQHGLIYFDGSPCYEYQEPTKAINKGWGTHNFDLGRNEVKCFLISNAMYWINEFHIDGLRVDAVSNILYLNYDREDGQWIPNIYGGHENLEGIAFLKELNGVLKHTCKGVITIAEESSSWPDISTPVEKGGLGFDFKWNMGWMNDTLRYISLDPVYRKYHHNLITFSMVYHYSEKFILSISHDEVVHGKKSLINKMWGDLWNKYAGLRLYMSYMIGHPGKKLIFMGSEFVQFVEWREYEQLQWQVVDQYESHKQTLHFFKKLNDLYHNETALWQCDYDHHGFRWIDADNSQQSILSFIRSSKDNKQKLIFICNFTPVTYYDYHLGVPDAGSYKEVFNSDNLEFGGSGQVMATEIFSSPQSSHGFEQRITIKIPPMATLVLKLIK.

Asp-318 (nucleophile) is an active-site residue. Glu-371 serves as the catalytic Proton donor.

The protein belongs to the glycosyl hydrolase 13 family. GlgB subfamily. As to quaternary structure, monomer.

It catalyses the reaction Transfers a segment of a (1-&gt;4)-alpha-D-glucan chain to a primary hydroxy group in a similar glucan chain.. It participates in glycan biosynthesis; glycogen biosynthesis. Functionally, catalyzes the formation of the alpha-1,6-glucosidic linkages in glycogen by scission of a 1,4-alpha-linked oligosaccharide from growing alpha-1,4-glucan chains and the subsequent attachment of the oligosaccharide to the alpha-1,6 position. In Francisella tularensis subsp. mediasiatica (strain FSC147), this protein is 1,4-alpha-glucan branching enzyme GlgB.